A 30-amino-acid polypeptide reads, in one-letter code: Cyclotide hyen-H (30 aa).

Residues 1 to 30 constitute a cross-link (cyclopeptide (Lys-Asp)); sequence KIPCGESCVYIPCISSVLGCSCSNKVCYKD. Disulfide bonds link C4-C20, C8-C22, and C13-C27.

In terms of processing, this is a cyclic peptide. Detected in stems (at protein level).

Functionally, probably participates in a plant defense mechanism. The sequence is that of Cyclotide hyen-H from Pigea enneasperma (Spade flower).